The sequence spans 21 residues: Serine protease inhibitor 3 (21 aa).

This sequence belongs to the protease inhibitor I3 (leguminous Kunitz-type inhibitor) family. As to expression, tubers.

It is found in the vacuole. Inhibits trypsin and chymotrypsin (serine proteases). Does not inhibit elastase, subtilisin, cathepsin L nor papain (serine and cysteine proteases). Protects the plant by inhibiting proteases of invading organisms, decreasing both hyphal growth and zoospores germination of Phytophthora infestans. In Solanum tuberosum (Potato), this protein is Serine protease inhibitor 3.